A 104-amino-acid chain; its full sequence is Ribonuclease P protein component 4 (104 aa).

Zn(2+)-binding residues include C63, C66, C89, and C92.

The protein belongs to the eukaryotic/archaeal RNase P protein component 4 family. As to quaternary structure, consists of a catalytic RNA component and at least 4-5 protein subunits. Requires Zn(2+) as cofactor.

Its subcellular location is the cytoplasm. It carries out the reaction Endonucleolytic cleavage of RNA, removing 5'-extranucleotides from tRNA precursor.. Functionally, part of ribonuclease P, a protein complex that generates mature tRNA molecules by cleaving their 5'-ends. This Methanosphaera stadtmanae (strain ATCC 43021 / DSM 3091 / JCM 11832 / MCB-3) protein is Ribonuclease P protein component 4.